The following is a 404-amino-acid chain: Druantia protein DruA (404 aa).

The protein resides in the cytoplasm. Functionally, component of antiviral defense system Druantia type I, composed of DruA, DruB, DruC, DruD and DruE. Expression of Druantia in E.coli (strain MG1655) confers resistance to phage lambda, SECphi18, SECphi27 and T4. This is Druantia protein DruA from Escherichia coli (strain UMEA 4076-1).